The chain runs to 1226 residues: Cytosolic carboxypeptidase 1 (1226 aa).

The tract at residues 599–619 (TEDDEDTESNSSVEQASVEVP) is disordered. One can recognise a Peptidase M14 domain in the interval 848–1138 (YPYTYSTLQM…KFCVGLLRLK (291 aa)). Residues histidine 920, glutamate 923, and histidine 1017 each coordinate Zn(2+). Catalysis depends on glutamate 1102, which acts as the Proton donor/acceptor. Serine 1168 carries the post-translational modification Phosphoserine. A disordered region spans residues 1206–1226 (YEPSAQEEVLSDSELSRTYLP).

This sequence belongs to the peptidase M14 family. Interacts with MYLK. The cofactor is Zn(2+).

It is found in the cytoplasm. It localises to the cytosol. The protein resides in the nucleus. Its subcellular location is the mitochondrion. It catalyses the reaction (L-glutamyl)(n+1)-gamma-L-glutamyl-L-glutamyl-[protein] + H2O = (L-glutamyl)(n)-gamma-L-glutamyl-L-glutamyl-[protein] + L-glutamate. It carries out the reaction C-terminal L-alpha-aminoacyl-L-glutamyl-L-glutamyl-[tubulin] + H2O = C-terminal L-alpha-aminoacyl-L-glutamyl-[tubulin] + L-glutamate. Metallocarboxypeptidase that mediates protein deglutamylation of tubulin and non-tubulin target proteins. Catalyzes the removal of polyglutamate side chains present on the gamma-carboxyl group of glutamate residues within the C-terminal tail of alpha- and beta-tubulin. Specifically cleaves tubulin long-side-chains, while it is not able to remove the branching point glutamate. Also catalyzes the removal of polyglutamate residues from the carboxy-terminus of alpha-tubulin as well as non-tubulin proteins such as MYLK. Involved in KLF4 deglutamylation which promotes KLF4 proteasome-mediated degradation, thereby negatively regulating cell pluripotency maintenance and embryogenesis. This chain is Cytosolic carboxypeptidase 1, found in Homo sapiens (Human).